The primary structure comprises 1537 residues: Adhesion G protein-coupled receptor L3 (1537 aa).

The N-terminal stretch at 1-19 (MWPPQLLILTMLLAPVVHG) is a signal peptide. The Extracellular segment spans residues 20–943 (GKHNERHPAL…VKHSDAVHDL (924 aa)). The disordered stretch occupies residues 53–80 (PAAERSTAHRGQGPRGAARGVRGPGAPG). The region spanning 103-192 (SCESYPIELR…KYLEVQYECV (90 aa)) is the SUEL-type lectin domain. 5 cysteine pairs are disulfide-bonded: Cys104/Cys134, Cys113/Cys191, Cys146/Cys178, Cys159/Cys165, and Cys203/Cys385. A glycan (N-linked (GlcNAc...) asparagine) is linked at Asn161. Positions 202 to 461 (LCPGLLKGVY…VVKYSLDFGP (260 aa)) constitute an Olfactomedin-like domain. Residues 317–347 (YHDTSPYRWGGKSDIDLAVDENGLWVIYATE) form an interaction with FLRT3 region. Residues Asp332, Asn380, Ala381, and Val435 each coordinate Ca(2+). Residues 521–540 (RSTTASLPGRRNRSTSTPSP) form a disordered region. N-linked (GlcNAc...) asparagine glycans are attached at residues Asn532, Asn617, Asn827, Asn840, Asn885, and Asn911. Residues 756-935 (DIVRENTDNI…AVLMAHVEVK (180 aa)) enclose the GAIN-B domain. 2 cysteine pairs are disulfide-bonded: Cys886–Cys917 and Cys905–Cys919. The interval 886 to 935 (CSFWSYSKRTMTGYWSTQGCRLLTTNKTHTTCSCNHLTNFAVLMAHVEVK) is GPS. The interval 923–939 (TNFAVLMAHVEVKHSDA) is stachel. The chain crosses the membrane as a helical span at residues 944–969 (LLDVITWVGILLSLVCLLICIFTFCF). Topologically, residues 970–975 (FRGLQS) are cytoplasmic. Residues 976–999 (DRNTIHKNLCISLFVAELLFLIGI) traverse the membrane as a helical segment. The N-linked (GlcNAc...) asparagine glycan is linked to Asn1000. Residues 1000–1006 (NRTDQPI) are Extracellular-facing. The helical transmembrane segment at 1007-1034 (ACAVFAALLHFFFLAAFTWMFLEGVQLY) threads the bilayer. The cysteines at positions 1008 and 1080 are disulfide-linked. Topologically, residues 1035–1048 (IMLVEVFESEHSRR) are cytoplasmic. A helical membrane pass occupies residues 1049–1071 (KYFYLVGYGMPALIVAVSAAVDY). Over 1072 to 1086 (RSYGTDKVCWLRLDT) the chain is Extracellular. A helical transmembrane segment spans residues 1087–1112 (YFIWSFIGPATLIIMLNVIFLGIALY). Residues 1113–1142 (KMFHHTAILKPESGCLDNINYEDNRPFIKS) lie on the Cytoplasmic side of the membrane. Residues 1143 to 1163 (WVIGAIALLCLLGLTWAFGLM) traverse the membrane as a helical segment. The Extracellular segment spans residues 1164–1168 (YINES). The N-linked (GlcNAc...) asparagine glycan is linked to Asn1166. The chain crosses the membrane as a helical span at residues 1169 to 1195 (TVIMAYLFTIFNSLQGMFIFIFHCVLQ). Over 1196-1537 (KKVRKEYGKC…KGPAHLVTSL (342 aa)) the chain is Cytoplasmic. A disordered region spans residues 1213–1237 (GKSTESSIGSGKTSGSRTPGRYSTG). A phosphoserine mark is found at Ser1254 and Ser1522. Positions 1512–1537 (FIVPPNKDGASPEGTSKGPAHLVTSL) are disordered. A PDZ-binding motif is present at residues 1532–1537 (HLVTSL).

This sequence belongs to the G-protein coupled receptor 2 family. LN-TM7 subfamily. As to quaternary structure, heterodimer of 2 chains generated by proteolytic processing; the large extracellular N-terminal fragment and the membrane-bound C-terminal fragment predominantly remain associated and non-covalently linked. Interacts (via olfactomedin-like domain) with FLRT1 (via extracellular domain). Interacts (via olfactomedin-like domain) with FLRT2 (via extracellular domain). Interacts (via olfactomedin-like domain) with FLRT3 (via extracellular domain); the interaction is direct. Interacts (via extracellular domain) with TENM1. Interacts (via extracellular domain) with TENM2. Interacts (via extracellular domain) with TENM3. Identified in a complex with FLRT3 and UNC5B; does not interact with UNC5B by itself. Identified in a complex with FLRT3 and UNC5D; does not interact with UNC5D by itself. Interacts (via PDZ-binding motif) with SHANK3. Interacts (via PDZ-binding motif) with DLG4. Post-translationally, autoproteolytically processed at the GPS region of the GAIN-B domain; this cleavage modulates receptor activity. In terms of processing, O-glycosylated (major) and N-glycosylated. In terms of tissue distribution, localizes to postsynaptic spines in non-overlapping dendritic domains of CA1-region pyramidal neurons: specifically localizes to excitatory synapses in the S.oriens and S.radiatum, corresponding to distinct presynaptic inputs onto CA1-region pyramidal neurons.

It is found in the cell membrane. Its subcellular location is the postsynaptic cell membrane. The protein localises to the cell projection. It localises to the axon. The protein resides in the cell junction. Its activity is regulated as follows. Forms a heterodimer of 2 chains generated by proteolytic processing that remain associated through non-covalent interactions mediated by the GAIN-B domain. In the inactivated receptor, the Stachel sequence (also named stalk) is embedded in the GAIN-B domain, where it adopts a beta-strand conformation. On activation, the Stachel moves into the 7 transmembrane region and adopts a twisted hook-shaped configuration that forms contacts within the receptor, leading to coupling of a G-alpha protein, which activates signaling. The cleaved GAIN-B and N-terminal domains can then dissociate from the rest of the receptor. In terms of biological role, orphan adhesion G-protein coupled receptor (aGPCR), which mediates synapse specificity. Ligand binding causes a conformation change that triggers signaling via guanine nucleotide-binding proteins (G proteins) and modulates the activity of downstream effectors. ADGRL3 is coupled with different classes of G alpha proteins, such as G(12)/G(13), G(s), G(i) or G(q), depending on the context. Coupling to G(12)/G(13) G proteins, which mediates the activation Rho small GTPases is the most efficient. Following G-protein coupled receptor activation, associates with cell adhesion molecules that are expressed at the surface of adjacent cells to direct synapse specificity. Specifically mediates the establishment of Schaffer-collateral synapses formed by CA3-region axons on CA1-region pyramidal neurons in the hippocampus. Localizes to postsynaptic spines in excitatory synapses in the S.oriens and S.radiatum and interacts with presynaptic cell adhesion molecules FLRT3 and TENM2, promoting synapse formation. Plays a role in the development of glutamatergic synapses in the cortex. Important in determining the connectivity rates between the principal neurons in the cortex. Its function is as follows. Orphan adhesion G-protein coupled receptor (aGPCR), which mediates synapse specificity. Ligand binding causes a conformation change that triggers signaling via guanine nucleotide-binding proteins (G proteins) and modulates the activity of downstream effectors, such as adenylate cyclase. Isoform 1 is specifically coupled to G(s) G proteins and mediates activation of adenylate cyclase activity. Following G-protein coupled receptor activation, undergoes liquid-liquid phase transition, associates with (1) cell adhesion molecules that are expressed at the surface of adjacent cells, as well as (2) PDZ-containing proteins, such as SHANK3 and DLG4, in the cytoplasm to direct synapse formation. Functionally, orphan adhesion G-protein coupled receptor (aGPCR). Ligand binding causes a conformation change that triggers signaling via guanine nucleotide-binding proteins (G proteins) and modulates the activity of downstream effectors, such as RhoA pathway. Isoform 7 is coupled to G(12) and/or G(13) G proteins (GNA12 and GNA13, respectively) and mediates the activation Rho small GTPases. In Mus musculus (Mouse), this protein is Adhesion G protein-coupled receptor L3.